We begin with the raw amino-acid sequence, 447 residues long: Phosphoglucosamine mutase (447 aa).

Catalysis depends on S102, which acts as the Phosphoserine intermediate. 4 residues coordinate Mg(2+): S102, D241, D243, and D245. S102 is modified (phosphoserine).

Belongs to the phosphohexose mutase family. Mg(2+) is required as a cofactor. Post-translationally, activated by phosphorylation.

The catalysed reaction is alpha-D-glucosamine 1-phosphate = D-glucosamine 6-phosphate. Catalyzes the conversion of glucosamine-6-phosphate to glucosamine-1-phosphate. The sequence is that of Phosphoglucosamine mutase from Methylococcus capsulatus (strain ATCC 33009 / NCIMB 11132 / Bath).